The primary structure comprises 289 residues: MALSSNWQALLASESNPTSNGKNKQSNRKIRNVKKVSKTVNVSSTTQYAPRKRKNGSKIMDMVYNMNKEISKHEKDKLEGKVFEFNPNKANTSTTIKEPVKVGISEDTRINSNKSKEIGKYIAMDCEFVGVGPEGKESALARISIVNYFGHVVLDEFVKPREKVVEWRTWVSGIKPEHMKNAITFKEAQKKTADILEGRILVGHALKHDLEALMLSHPKSLLRDTSRHLPFRKLYAKGKTPSLKKLTREVLKISIQEGEHSSVEDARATMLLYKKEKTEFEKIHRNTFN.

Residues 1 to 24 are compositionally biased toward polar residues; sequence MALSSNWQALLASESNPTSNGKNK. The interval 1–34 is disordered; it reads MALSSNWQALLASESNPTSNGKNKQSNRKIRNVK. Residues 25-34 are compositionally biased toward basic residues; sequence QSNRKIRNVK. One can recognise an Exonuclease domain in the interval 121–273; sequence YIAMDCEFVG…EDARATMLLY (153 aa).

This sequence belongs to the REXO4 family.

It is found in the nucleus. Exoribonuclease involved in ribosome biosynthesis. Involved in the processing of ITS1, the internal transcribed spacer localized between the 18S and 5.8S rRNAs. This Saccharomyces cerevisiae (strain ATCC 204508 / S288c) (Baker's yeast) protein is RNA exonuclease 4 (REX4).